The following is a 363-amino-acid chain: Anthranilate phosphoribosyltransferase (363 aa).

5-phospho-alpha-D-ribose 1-diphosphate-binding positions include Gly-85, 88–89 (GD), Thr-93, 95–98 (NVST), 113–121 (KHGNRALSS), and Ala-125. Gly-85 serves as a coordination point for anthranilate. Ser-97 serves as a coordination point for Mg(2+). Asn-116 provides a ligand contact to anthranilate. Arg-171 serves as a coordination point for anthranilate. Mg(2+)-binding residues include Asp-233 and Glu-234.

It belongs to the anthranilate phosphoribosyltransferase family. Homodimer. It depends on Mg(2+) as a cofactor.

The catalysed reaction is N-(5-phospho-beta-D-ribosyl)anthranilate + diphosphate = 5-phospho-alpha-D-ribose 1-diphosphate + anthranilate. The protein operates within amino-acid biosynthesis; L-tryptophan biosynthesis; L-tryptophan from chorismate: step 2/5. Its function is as follows. Catalyzes the transfer of the phosphoribosyl group of 5-phosphorylribose-1-pyrophosphate (PRPP) to anthranilate to yield N-(5'-phosphoribosyl)-anthranilate (PRA). The chain is Anthranilate phosphoribosyltransferase from Gluconobacter oxydans (strain 621H) (Gluconobacter suboxydans).